We begin with the raw amino-acid sequence, 489 residues long: Transmembrane protein 161A (489 aa).

An N-terminal signal peptide occupies residues 1–23 (MAVMGIQMVVTLLVASLMQRVSP). Residues 24 to 98 (HYSFGRWLLC…INTMDALVLR (75 aa)) lie on the Extracellular side of the membrane. N-linked (GlcNAc...) asparagine glycosylation occurs at asparagine 34. Residues 99–119 (YFLEYQWFIDFALYSTIIYLF) form a helical membrane-spanning segment. The Cytoplasmic portion of the chain corresponds to 120-134 (TEAYYCVVDAQNEIN). Residues 135–155 (IGVLWCLMSIIFSIKVLFTVM) traverse the membrane as a helical segment. The Extracellular segment spans residues 156-166 (KHYFRSEEGGE). The helical transmembrane segment at 167-187 (RSVCMTFAFFFLLIAMIVTIV) threads the bilayer. Residues 188 to 224 (RDEYLEFGLEPGLASVCHNLENFLAQQGWQWSMPFVK) lie on the Cytoplasmic side of the membrane. A helical transmembrane segment spans residues 225–245 (LAFKIALVALCAFLGGCLTFP). Residues 246–264 (GLRLAQTHLDALKMAADRP) are Extracellular-facing. Residues 265–285 (MLQLLLHMSFLPPVIVVVLWI) form a helical membrane-spanning segment. At 286 to 304 (RPITRDFLLNAPMGKESVE) the chain is on the cytoplasmic side. Residues 305–325 (LMSNSAYNTFRLWIIVLLCLL) traverse the membrane as a helical segment. At 326 to 370 (RFCLTRFHLQAYLCLADRWVEQMKREAGRISMLEIQRKISRIFCY) the chain is on the extracellular side. The helical transmembrane segment at 371–391 (LTVVALQYLAPVILTFHCVFM) threads the bilayer. The Cytoplasmic portion of the chain corresponds to 392-459 (LKSLGDYSWG…GLFTPLFFRG (68 aa)). Positions 413 to 432 (VDSSPVQSHSPTSEEEEDTE) are disordered. A helical membrane pass occupies residues 460-480 (IFSFLTWWVSVCQIITSLFGL). The Extracellular portion of the chain corresponds to 481–489 (YFHQYLGAS).

The protein belongs to the TMEM161 family.

Its subcellular location is the membrane. May play a role in protection against oxidative stress. The sequence is that of Transmembrane protein 161A (tmem161a) from Xenopus laevis (African clawed frog).